A 1273-amino-acid polypeptide reads, in one-letter code: MVRLREIPRTAALAWSPGSASPYIATGTRAGAVDADFSNETDLELWDLALEQEGGSAELQPAAKLSTESGFHDLAWTESEDSSRGIIAGALENGSLDLWNADKLLSGASDPLVSRASQHSGPVKTLQFNPRHSNLLATGGSKGELFISDLNNIDHPFRLGNVNARLDDIECLDWNKKVPHILVTGSSAGFVTVWDVKTKKESLTLNNLGRKAVSAVAWDPEKPTKLITSIPLETDPLILVWDLRNSNAPERVLRGHESGVLSLSWCAQDPDLLLSSGKDNRTICWNPQTGVQYGEFPVVTNWTFLTRWNPHNPNMFATASFDGRISIQTIQNTKSDAIAQAGASQVQPVDDEDFFAKAQSQPQASTFSLPTAPKWLQRPSSVSFGFGGRVISVGLTDPSKPASRTSKVRITRFEVDSILSSTTQTFEEALKAGDLRRICETRIENAQNDSDRVDWKIIETLISDNPKMQLINYLGFSSEVDETADSLSKLGLGKSEDGGANGVPESDSRGPGVKKHKRLSSIFDTHADSDNFLTDLSASKGAKTNNPFQIYTGSESEADRGITRALLLGDFEKALDICLQEDRMSDAFMVAICGGQKCIDKAQEAYFQKQLEGPNYLRLMAAIVGKNLWDIVHNAGLANWKEAIATICTFATDAEFPDLCETLGDRLEEQAKAEGDKESRKNAAFCFLASSKLEKVVGIWIDELQENENKAIQEATNGETSFSIHVRALQNLIEKVTVFRHVTKFEDAETQKPSDWKLTLLYDKYIEYADVAAAHGQLGVAERYLDLLPQAHPAAVVARNRIKLATEKTTARSAPAHISAASHLTTKPPQQPNVPRGMYNPSAPMTQANNLFKPPAPMQVSNPYAPTGASSAYSPAGYQPSQQHQPTVPLGGPPQAFGTAQQSNIAPPPRAANQSPSTVTSYTQATNLPAWNDLPEGFAKALTPRRGTPSAAAATISSPFPHQQPPQPSQSPQTISPHQPPPPRQRTSMAVPPPPRGPAPPRMTSPPAVGQPHGFPSTRKTSLNFKCIYPTTQHTPTGPGMNVPQIPRGPSPYNAPPTGPPPSNRYAPSPAAQPSAPQPPRAAVAAPPPTGPPAPAPAQSPYSYQHPPPAHGSYAPPSAPTGARPDHQPQHQPPPPGSSPVSRPGTAQSQRKPAPAAKYPPGDRSHIPANAQPIFEILSADMQRVKARAPTSFKAQVNDAERRLNILFDHLNNEDLLKPATVESMAELARALQARDYETAQSIHLDIFTNRNDECGNWMVGVKRLIGMSRATP.

7 WD repeats span residues 5-47, 66-109, 118-158, 164-204, 208-251, 255-295, and 298-338; these read REIP…ELWD, STES…SGAS, QHSG…HPFR, ARLD…ESLT, LGRK…APER, GHES…QYGE, and VVTN…SDAI. Residues 383–411 form a WD 8; interaction with SEC13 repeat; the sequence is SFGFGGRVISVGLTDPSKPASRTSKVRIT. Disordered stretches follow at residues 489-515, 808-921, and 940-1168; these read KLGLGKSEDGGANGVPESDSRGPGVKK, KTTA…TVTS, and KALT…SHIP. 2 stretches are compositionally biased toward polar residues: residues 859–886 and 912–921; these read QVSNPYAPTGASSAYSPAGYQPSQQHQP and ANQSPSTVTS. Residues 951–961 are compositionally biased toward low complexity; sequence AAAATISSPFP. Over residues 991 to 1004 the composition is skewed to pro residues; that stretch reads VPPPPRGPAPPRMT. Over residues 1018 to 1036 the composition is skewed to polar residues; that stretch reads TRKTSLNFKCIYPTTQHTP. Pro residues-rich tracts occupy residues 1047–1063 and 1076–1098; these read PRGPSPYNAPPTGPPPS and APQPPRAAVAAPPPTGPPAPAPA.

The protein belongs to the WD repeat SEC31 family. The COPII coat is composed of at least 5 proteins: the SEC23/24 complex, the SEC13/31 complex, and the protein SAR1. SEC13 and SEC31 make a 2:2 tetramer that forms the edge element of the COPII outer coat. The tetramer self-assembles in multiple copies to form the complete polyhedral cage. Interacts (via WD 8) with SEC13.

Its subcellular location is the cytoplasmic vesicle. It localises to the COPII-coated vesicle membrane. The protein localises to the endoplasmic reticulum membrane. Its function is as follows. Component of the coat protein complex II (COPII) which promotes the formation of transport vesicles from the endoplasmic reticulum (ER). The coat has two main functions, the physical deformation of the endoplasmic reticulum membrane into vesicles and the selection of cargo molecules. This is Protein transport protein SEC31 (SEC31) from Ajellomyces capsulatus (Darling's disease fungus).